The following is an 865-amino-acid chain: AP-1 complex subunit gamma-1 (865 aa).

Residues 665–690 form a disordered region; that stretch reads AEPLETPVDEMTQSPQSSLSRAPSTS. Positions 675–690 are enriched in polar residues; the sequence is MTQSPQSSLSRAPSTS. Residues 746 to 860 enclose the GAE domain; it reads KSYPPIVVFD…LDQVDFGKLP (115 aa).

This sequence belongs to the adaptor complexes large subunit family. Adaptor protein complex 1 (AP-1) is a heterotetramer composed of two large adaptins (gamma-type subunit apl4 and beta-type subunit apl2), a medium adaptin (mu-type subunit apm1) and a small adaptin (sigma-type subunit aps1). AP-1 interacts with clathrin.

Its subcellular location is the cytoplasmic vesicle. The protein resides in the clathrin-coated vesicle membrane. It is found in the golgi apparatus. In terms of biological role, adaptins are components of the adaptor complexes which link clathrin to receptors in coated vesicles. Clathrin-associated protein complexes are believed to interact with the cytoplasmic tails of membrane proteins, leading to their selection and concentration. The AP-1 complex interacts directly with clathrin. In Schizosaccharomyces pombe (strain 972 / ATCC 24843) (Fission yeast), this protein is AP-1 complex subunit gamma-1 (apl4).